The following is a 292-amino-acid chain: Bifunctional protein FolD (292 aa).

NADP(+) contacts are provided by residues 169 to 171 (GRS) and S194.

Belongs to the tetrahydrofolate dehydrogenase/cyclohydrolase family. In terms of assembly, homodimer.

It carries out the reaction (6R)-5,10-methylene-5,6,7,8-tetrahydrofolate + NADP(+) = (6R)-5,10-methenyltetrahydrofolate + NADPH. The enzyme catalyses (6R)-5,10-methenyltetrahydrofolate + H2O = (6R)-10-formyltetrahydrofolate + H(+). Its pathway is one-carbon metabolism; tetrahydrofolate interconversion. Functionally, catalyzes the oxidation of 5,10-methylenetetrahydrofolate to 5,10-methenyltetrahydrofolate and then the hydrolysis of 5,10-methenyltetrahydrofolate to 10-formyltetrahydrofolate. This Nostoc punctiforme (strain ATCC 29133 / PCC 73102) protein is Bifunctional protein FolD.